The sequence spans 173 residues: Protein GrpE (173 aa).

Over residues 1–28 (MTEEEKTKSEAEEIEQNNKEEEQEKSVE) the composition is skewed to basic and acidic residues. The disordered stretch occupies residues 1–30 (MTEEEKTKSEAEEIEQNNKEEEQEKSVEEL).

This sequence belongs to the GrpE family. As to quaternary structure, homodimer.

It localises to the cytoplasm. Its function is as follows. Participates actively in the response to hyperosmotic and heat shock by preventing the aggregation of stress-denatured proteins, in association with DnaK and GrpE. It is the nucleotide exchange factor for DnaK and may function as a thermosensor. Unfolded proteins bind initially to DnaJ; upon interaction with the DnaJ-bound protein, DnaK hydrolyzes its bound ATP, resulting in the formation of a stable complex. GrpE releases ADP from DnaK; ATP binding to DnaK triggers the release of the substrate protein, thus completing the reaction cycle. Several rounds of ATP-dependent interactions between DnaJ, DnaK and GrpE are required for fully efficient folding. The protein is Protein GrpE of Methanosphaera stadtmanae (strain ATCC 43021 / DSM 3091 / JCM 11832 / MCB-3).